We begin with the raw amino-acid sequence, 251 residues long: Probable transcriptional regulatory protein TGRD_462 (251 aa).

This sequence belongs to the TACO1 family.

Its subcellular location is the cytoplasm. In Endomicrobium trichonymphae, this protein is Probable transcriptional regulatory protein TGRD_462.